A 634-amino-acid chain; its full sequence is Probable potassium transport system protein Kup (634 aa).

12 consecutive transmembrane segments (helical) span residues 19–39 (AIGLMVGAVGVCYGDIGTSPL), 62–82 (VLSLIFWSLVWVVSIKYVIFV), 113–133 (FVVVAGLIGAALFYGDSMITP), 150–170 (GLEHWTVPLALIVLIGLFLIQ), 177–197 (IGILFGPVMVLWFGALAALGV), 225–245 (IGVAILGATVLALTGAEALYA), 259–279 (WFLLVLPALVLNYFGQGATIL), 291–311 (LLAPGWALLPMVALSTLATVI), 349–369 (IYIGGVNWALMVGVVLLVLGF), 379–399 (YGVAVTGTMLITTLLMGVVIW), 406–426 (LWLGVPFFCVMLAVDSLFFAA), and 431–451 (VIQGGAFPVIAGIVIFILMST).

The protein belongs to the HAK/KUP transporter (TC 2.A.72) family.

It localises to the cell inner membrane. It carries out the reaction K(+)(in) + H(+)(in) = K(+)(out) + H(+)(out). In terms of biological role, transport of potassium into the cell. Likely operates as a K(+):H(+) symporter. In Pseudomonas aeruginosa (strain LESB58), this protein is Probable potassium transport system protein Kup.